We begin with the raw amino-acid sequence, 351 residues long: Divinyl chlorophyll a/b light-harvesting protein PcbC (351 aa).

Helical transmembrane passes span 27-47, 81-101, 140-160, 202-222, 242-262, and 309-329; these read FIGS…GSTL, GVWT…FSAV, FILG…VEWA, VMSG…WHIA, AVLS…AFWC, and LSNV…WHAL.

Belongs to the PsbB/PsbC family. IsiA/Pcb subfamily. The antenna complex consists of divinyl chlorophylls (a and b) and divinyl chlorophyll a/b binding proteins and binds more divinyl chlorophyll b than does the antenna complex from high-light-adapted Prochlorococcus. Divinyl chlorophyll a serves as cofactor. Requires divinyl chlorophyll b as cofactor.

Its subcellular location is the cellular thylakoid membrane. Functionally, the antenna complex functions as a light receptor, it captures and delivers excitation energy to photosystems II and I. The Prochlorales pcb genes are not related to higher plant LHCs. The sequence is that of Divinyl chlorophyll a/b light-harvesting protein PcbC (pcbC) from Prochlorococcus marinus (strain NATL2A).